We begin with the raw amino-acid sequence, 1227 residues long: Tyrosine-protein kinase receptor ver-3 (1227 aa).

The signal sequence occupies residues 1-17 (MKLKLTVLLILVHASAS). The Extracellular portion of the chain corresponds to 18 to 764 (YKPPAIEVED…VQVNNAPKGS (747 aa)). The region spanning 20-110 (PPAIEVEDYQ…RESDTGTYSC (91 aa)) is the Ig-like C2-type 1 domain. A disulfide bridge connects residues Cys-52 and Cys-110. Residues Asn-119, Asn-211, Asn-245, Asn-255, Asn-381, Asn-425, and Asn-528 are each glycosylated (N-linked (GlcNAc...) asparagine). The Ig-like C2-type 2 domain occupies 200–325 (VNFECRYKKE…EHENKETKYT (126 aa)). Cysteines 204 and 313 form a disulfide. Ig-like C2-type domains lie at 565 to 666 (PHHE…TSID) and 673 to 758 (PSIT…VQVN). Intrachain disulfides connect Cys-592–Cys-650 and Cys-696–Cys-740. N-linked (GlcNAc...) asparagine glycosylation occurs at Asn-697. Residues 765–785 (LFFYWFLALLLLISIIAVFLL) traverse the membrane as a helical segment. Over 786–1227 (TCKLRASNRL…ERYLIVESHA (442 aa)) the chain is Cytoplasmic. Residues 847-1175 (LEILNPIGSG…HMRDSSSQFL (329 aa)) enclose the Protein kinase domain. ATP contacts are provided by residues 853 to 861 (IGSGHFGVV) and Lys-886. Asp-1030 acts as the Proton acceptor in catalysis. Residues 1194–1227 (DWIQDSRPDVPNVSFQKSPKKQKEERYLIVESHA) are disordered. Over residues 1214 to 1227 (KQKEERYLIVESHA) the composition is skewed to basic and acidic residues.

Belongs to the protein kinase superfamily. Tyr protein kinase family. In terms of tissue distribution, expressed in the ALA neuron.

Its subcellular location is the cell membrane. The catalysed reaction is L-tyrosyl-[protein] + ATP = O-phospho-L-tyrosyl-[protein] + ADP + H(+). In terms of biological role, receptor tyrosine kinase which may be involved, downstream of pvf-1, in the positioning of ray 1, the most anterior ray sensillum in the male tail. In Caenorhabditis elegans, this protein is Tyrosine-protein kinase receptor ver-3.